The chain runs to 1236 residues: DNA-directed RNA polymerase subunit beta (1236 aa).

Residues 1185–1236 are disordered; sequence IEGSEDYTEPKQPNDNYLEEEENKDKESDYDEDLNFDDLTKGLQLDDFNDEH. Positions 1201–1220 are enriched in acidic residues; that stretch reads YLEEEENKDKESDYDEDLNF.

It belongs to the RNA polymerase beta chain family. As to quaternary structure, the RNAP catalytic core consists of 2 alpha, 1 beta, 1 beta' and 1 omega subunit. When a sigma factor is associated with the core the holoenzyme is formed, which can initiate transcription.

It catalyses the reaction RNA(n) + a ribonucleoside 5'-triphosphate = RNA(n+1) + diphosphate. Functionally, DNA-dependent RNA polymerase catalyzes the transcription of DNA into RNA using the four ribonucleoside triphosphates as substrates. The sequence is that of DNA-directed RNA polymerase subunit beta from Clostridium tetani (strain Massachusetts / E88).